A 450-amino-acid chain; its full sequence is UDP-N-acetylmuramoylalanine--D-glutamate ligase (450 aa).

115-121 (GTNGKTT) contacts ATP.

The protein belongs to the MurCDEF family.

It is found in the cytoplasm. The catalysed reaction is UDP-N-acetyl-alpha-D-muramoyl-L-alanine + D-glutamate + ATP = UDP-N-acetyl-alpha-D-muramoyl-L-alanyl-D-glutamate + ADP + phosphate + H(+). Its pathway is cell wall biogenesis; peptidoglycan biosynthesis. Functionally, cell wall formation. Catalyzes the addition of glutamate to the nucleotide precursor UDP-N-acetylmuramoyl-L-alanine (UMA). The chain is UDP-N-acetylmuramoylalanine--D-glutamate ligase from Lachnospira eligens (strain ATCC 27750 / DSM 3376 / VPI C15-48 / C15-B4) (Eubacterium eligens).